Consider the following 328-residue polypeptide: C-type lectin domain family 11 member A (328 aa).

Residues 1-21 (MQAAWLLGALLVPHLLSFGHG) form the signal peptide. A disordered region spans residues 58–111 (PTGVGNKDNLAENSEGKEVWEATETQGEEEEEETTTTPSSSPTPFPSPSPTSED). One can recognise a C-type lectin domain in the interval 188-325 (LGHKCFLLSR…CERRLYFVCE (138 aa)). Cystine bridges form between C209-C324 and C301-C316.

O-glycosylated. Probably sulfated on the O-glycans.

The protein localises to the cytoplasm. It localises to the secreted. In terms of biological role, promotes osteogenesis by stimulating the differentiation of mesenchymal progenitors into mature osteoblasts. Important for repair and maintenance of adult bone. The protein is C-type lectin domain family 11 member A (Clec11a) of Rattus norvegicus (Rat).